We begin with the raw amino-acid sequence, 807 residues long: Glycerol-3-phosphate acyltransferase (807 aa).

Residues 308–313 (CHRSHM) carry the HXXXXD motif motif.

This sequence belongs to the GPAT/DAPAT family.

It localises to the cell inner membrane. It carries out the reaction sn-glycerol 3-phosphate + an acyl-CoA = a 1-acyl-sn-glycero-3-phosphate + CoA. Its pathway is phospholipid metabolism; CDP-diacylglycerol biosynthesis; CDP-diacylglycerol from sn-glycerol 3-phosphate: step 1/3. This chain is Glycerol-3-phosphate acyltransferase, found in Shewanella woodyi (strain ATCC 51908 / MS32).